The primary structure comprises 639 residues: Protein sly1 homolog (639 aa).

4 tandem repeats follow at residues 85 to 121 (DENLDRIQQDFSSGLYDVYHLNFLAPITRSKIENLAA), 203 to 245 (RNSA…FSFQ), 423 to 460 (LDLLRDGEFGQAEDKLRLYIIYFICAQQLPESEQERLK), and 464 to 500 (QAAGCDLTALAYVQRWKGIMNRSPSISQATQYEGGGT). The 4 X approximate repeats stretch occupies residues 85 to 500 (DENLDRIQQD…QATQYEGGGT (416 aa)).

The protein belongs to the STXBP/unc-18/SEC1 family. As to expression, in embryos, from stage 14, expression is seen in posterior midgut, esophagus and salivary glands. No expression is seen in larval imaginal disks.

The protein resides in the cytoplasm. It is found in the membrane. Functionally, non-vital for development. The protein is Protein sly1 homolog (Slh) of Drosophila melanogaster (Fruit fly).